The following is a 304-amino-acid chain: UDP-3-O-acyl-N-acetylglucosamine deacetylase (304 aa).

Positions 78, 237, and 241 each coordinate Zn(2+). H264 functions as the Proton donor in the catalytic mechanism.

Belongs to the LpxC family. It depends on Zn(2+) as a cofactor.

The catalysed reaction is a UDP-3-O-[(3R)-3-hydroxyacyl]-N-acetyl-alpha-D-glucosamine + H2O = a UDP-3-O-[(3R)-3-hydroxyacyl]-alpha-D-glucosamine + acetate. It functions in the pathway glycolipid biosynthesis; lipid IV(A) biosynthesis; lipid IV(A) from (3R)-3-hydroxytetradecanoyl-[acyl-carrier-protein] and UDP-N-acetyl-alpha-D-glucosamine: step 2/6. In terms of biological role, catalyzes the hydrolysis of UDP-3-O-myristoyl-N-acetylglucosamine to form UDP-3-O-myristoylglucosamine and acetate, the committed step in lipid A biosynthesis. This is UDP-3-O-acyl-N-acetylglucosamine deacetylase from Polynucleobacter necessarius subsp. necessarius (strain STIR1).